A 520-amino-acid chain; its full sequence is MKFSRFKSRNTNYYTNTIITTETQLNNSNNNNFNNTTTINHFNKIHQQQSNNNNNNNNNNNNNNNNNNFINFSNHTNNINNNIDNRSDKKRKLNCMEKSNISSSSPYTLTSTPSSSSSSSSCESSLLNLNNEKLIEDKIISFSNENVGNIKIISMSDSKFTIYNSNNTDYKELLFWKVWRNFFLKNEILFHQRLYNLYSSFEFNDLKSLLNFQYREYLQHITFSFYFDEPLSLINFKNNNNYNNNNIFPNSVKKITFGYSFNQAINQNSFSPNSSSLTSLEFGESFNQDIQINSLPPSLTCLKFGKNFNCPLSLGVLPLSGNLKSISFGLSYNQPIQYIPNGVEKLKIGGNSVYNNKNNNVNNKNNNKINKYPNSIKIFKFDKYFNDEIMVGTIPNSVLKVKFGVQFNREISMEQIPCSVTEIDFGLKWNQPLNEFSLPKNGNLKSIIFSHFFNQQINANCLPDGLTHLKFGPLYSKEINLNHLPSSIEILMFHNSFQSLNLLKNYNNLNNKKIQIIYYN.

Disordered regions lie at residues 47 to 86 (QQQS…IDNR) and 100 to 121 (NISS…SSSS). Residues 51 to 84 (NNNNNNNNNNNNNNNNNNFINFSNHTNNINNNID) show a composition bias toward low complexity. FNIP repeat units follow at residues 242–285 (YNNN…FGES), 286–331 (FNQD…FGLS), 332–406 (YNQP…FGVQ), and 453–496 (FNQQ…FHNS).

This is FNIP repeat-containing protein DDB_G0274063/DDB_G0272642 from Dictyostelium discoideum (Social amoeba).